We begin with the raw amino-acid sequence, 186 residues long: Inosine/xanthosine triphosphatase (186 aa).

Gln-75 contributes to the Mg(2+) binding site.

Belongs to the YjjX NTPase family. In terms of assembly, homodimer. It depends on Mg(2+) as a cofactor. Mn(2+) is required as a cofactor.

It catalyses the reaction XTP + H2O = XDP + phosphate + H(+). It carries out the reaction ITP + H2O = IDP + phosphate + H(+). Its function is as follows. Phosphatase that hydrolyzes non-canonical purine nucleotides such as XTP and ITP to their respective diphosphate derivatives. Probably excludes non-canonical purines from DNA/RNA precursor pool, thus preventing their incorporation into DNA/RNA and avoiding chromosomal lesions. The protein is Inosine/xanthosine triphosphatase of Shewanella baltica (strain OS185).